A 509-amino-acid polypeptide reads, in one-letter code: BPI fold-containing family C protein (509 aa).

Positions 1 to 23 are cleaved as a signal peptide; that stretch reads MRTKQVPVLWACFLLWSLYIASS. Residues Asn63, Asn79, Asn92, Asn113, and Asn117 are each glycosylated (N-linked (GlcNAc...) asparagine). A disulfide bridge connects residues Cys161 and Cys202. 5 N-linked (GlcNAc...) asparagine glycosylation sites follow: Asn215, Asn227, Asn357, Asn374, and Asn457.

It belongs to the BPI/LBP/Plunc superfamily. BPI/LBP family.

The protein resides in the secreted. The protein is BPI fold-containing family C protein (Bpifc) of Mus musculus (Mouse).